A 217-amino-acid chain; its full sequence is Uridylate kinase (217 aa).

An ATP-binding site is contributed by 6 to 10; that stretch reads KLSGR. Gly38 is a UMP binding site. 2 residues coordinate ATP: Gly39 and Arg43. Residues Asp60 and 107-113 each bind UMP; that span reads FQPGQST. ATP contacts are provided by Asn134, Tyr139, and Asp142.

This sequence belongs to the UMP kinase family. In terms of assembly, homohexamer.

It is found in the cytoplasm. The enzyme catalyses UMP + ATP = UDP + ADP. The protein operates within pyrimidine metabolism; CTP biosynthesis via de novo pathway; UDP from UMP (UMPK route): step 1/1. Its activity is regulated as follows. Inhibited by UTP. Its function is as follows. Catalyzes the reversible phosphorylation of UMP to UDP. In Pyrobaculum islandicum (strain DSM 4184 / JCM 9189 / GEO3), this protein is Uridylate kinase.